A 305-amino-acid chain; its full sequence is UDP-3-O-acyl-N-acetylglucosamine deacetylase (305 aa).

Zn(2+) contacts are provided by histidine 78, histidine 237, and aspartate 241. The active-site Proton donor is the histidine 264.

Belongs to the LpxC family. Zn(2+) serves as cofactor.

It catalyses the reaction a UDP-3-O-[(3R)-3-hydroxyacyl]-N-acetyl-alpha-D-glucosamine + H2O = a UDP-3-O-[(3R)-3-hydroxyacyl]-alpha-D-glucosamine + acetate. It functions in the pathway glycolipid biosynthesis; lipid IV(A) biosynthesis; lipid IV(A) from (3R)-3-hydroxytetradecanoyl-[acyl-carrier-protein] and UDP-N-acetyl-alpha-D-glucosamine: step 2/6. Catalyzes the hydrolysis of UDP-3-O-myristoyl-N-acetylglucosamine to form UDP-3-O-myristoylglucosamine and acetate, the committed step in lipid A biosynthesis. The polypeptide is UDP-3-O-acyl-N-acetylglucosamine deacetylase (Burkholderia ambifaria (strain ATCC BAA-244 / DSM 16087 / CCUG 44356 / LMG 19182 / AMMD) (Burkholderia cepacia (strain AMMD))).